Here is a 245-residue protein sequence, read N- to C-terminus: 8-amino-3,8-dideoxy-manno-octulosonate cytidylyltransferase (245 aa).

The protein belongs to the KdsB family.

The protein localises to the cytoplasm. The catalysed reaction is 8-amino-3,8-dideoxy-alpha-D-manno-octulosonate + CTP = CMP-8-amino-3,8-dideoxy-alpha-D-manno-oct-2-ulosonate + diphosphate. It participates in bacterial outer membrane biogenesis; lipopolysaccharide biosynthesis. In terms of biological role, activates KDO8N (a required 8-carbon sugar) for incorporation into bacterial lipopolysaccharide in the Shewanella genus. The chain is 8-amino-3,8-dideoxy-manno-octulosonate cytidylyltransferase from Shewanella halifaxensis (strain HAW-EB4).